Here is a 533-residue protein sequence, read N- to C-terminus: Probable RNA-binding protein 46 (533 aa).

RRM domains are found at residues 61-139 (CEVF…VSLD), 141-223 (CRLF…WADP), and 236-308 (KVLY…LAKP).

As to quaternary structure, interacts with YTHDC2, MEIOC, MOV10, CNOT6L, DDX4, UPF1 and PABPC1.

It localises to the cytoplasm. In terms of biological role, essential for male and female fertility, playing a crucial role in regulating germ cell development by ensuring the proper progression of meiosis prophase I. Regulates mitotic-to-meiotic transition in spermatogenesis by forming a complex with MEIOC and YTHDC2 which recognizes and down-regulates mitotic transcripts for a successful meiotic entry. Required for normal synaptonemal complex formation during meiosis, binding meiotic cohesin subunit mRNAs containing GCCUAU/GUUCGA motifs in their 3'UTRs regions and positively regulating their translation. Required for spermatogonial differentiation in both developing and adult testis. The protein is Probable RNA-binding protein 46 (RBM46) of Homo sapiens (Human).